Reading from the N-terminus, the 412-residue chain is Putative F-box protein At3g22940 (412 aa).

The F-box domain maps to 1–38; the sequence is MPLEEILSRLPLKSTRAVRSTCKKWDSLFKNRSFISKA.

In Arabidopsis thaliana (Mouse-ear cress), this protein is Putative F-box protein At3g22940.